Here is a 78-residue protein sequence, read N- to C-terminus: Large ribosomal subunit protein bL28 (78 aa).

The protein belongs to the bacterial ribosomal protein bL28 family.

The polypeptide is Large ribosomal subunit protein bL28 (Prochlorococcus marinus (strain SARG / CCMP1375 / SS120)).